The primary structure comprises 534 residues: C-22 sterol desaturase ERG5B (534 aa).

The chain crosses the membrane as a helical span at residues 43–61; sequence IAVTIFAVLIAYDQFMYIW. C480 is a heme binding site.

Belongs to the cytochrome P450 family. Requires heme as cofactor.

Its subcellular location is the endoplasmic reticulum membrane. The enzyme catalyses 5-dehydroepisterol + NADPH + O2 + H(+) = ergosta-5,7,22,24(28)-tetraen-3beta-ol + NADP(+) + 2 H2O. Its pathway is steroid metabolism; ergosterol biosynthesis. In terms of biological role, C-22 sterol desaturase; part of the third module of ergosterol biosynthesis pathway that includes the late steps of the pathway. ERG5A and ERG5B convert 5-dehydroepisterol into ergosta-5,7,22,24(28)-tetraen-3beta-ol by forming the C-22(23) double bond in the sterol side chain. The third module or late pathway involves the ergosterol synthesis itself through consecutive reactions that mainly occur in the endoplasmic reticulum (ER) membrane. Firstly, the squalene synthase ERG9 catalyzes the condensation of 2 farnesyl pyrophosphate moieties to form squalene, which is the precursor of all steroids. Squalene synthase is crucial for balancing the incorporation of farnesyl diphosphate (FPP) into sterol and nonsterol isoprene synthesis. Secondly, squalene is converted into lanosterol by the consecutive action of the squalene epoxidase ERG1 and the lanosterol synthase ERG7. Then, the delta(24)-sterol C-methyltransferase ERG6 methylates lanosterol at C-24 to produce eburicol. Eburicol is the substrate of the sterol 14-alpha demethylase encoded by CYP51A, CYP51B and CYP51C, to yield 4,4,24-trimethyl ergosta-8,14,24(28)-trienol. CYP51B encodes the enzyme primarily responsible for sterol 14-alpha-demethylation, and plays an essential role in ascospore formation. CYP51A encodes an additional sterol 14-alpha-demethylase, induced on ergosterol depletion and responsible for the intrinsic variation in azole sensitivity. The third CYP51 isoform, CYP51C, does not encode a sterol 14-alpha-demethylase, but is required for full virulence on host wheat ears. The C-14 reductase ERG24 then reduces the C14=C15 double bond which leads to 4,4-dimethylfecosterol. A sequence of further demethylations at C-4, involving the C-4 demethylation complex containing the C-4 methylsterol oxidases ERG25, the sterol-4-alpha-carboxylate 3-dehydrogenase ERG26 and the 3-keto-steroid reductase ERG27, leads to the production of fecosterol via 4-methylfecosterol. ERG28 has a role as a scaffold to help anchor ERG25, ERG26 and ERG27 to the endoplasmic reticulum. The C-8 sterol isomerase ERG2 then catalyzes the reaction which results in unsaturation at C-7 in the B ring of sterols and thus converts fecosterol to episterol. The sterol-C5-desaturases ERG3A and ERG3BB then catalyze the introduction of a C-5 double bond in the B ring to produce 5-dehydroepisterol. The C-22 sterol desaturases ERG5A and ERG5B further convert 5-dehydroepisterol into ergosta-5,7,22,24(28)-tetraen-3beta-ol by forming the C-22(23) double bond in the sterol side chain. Finally, ergosta-5,7,22,24(28)-tetraen-3beta-ol is substrate of the C-24(28) sterol reductase ERG4 to produce ergosterol. The polypeptide is C-22 sterol desaturase ERG5B (Gibberella zeae (strain ATCC MYA-4620 / CBS 123657 / FGSC 9075 / NRRL 31084 / PH-1) (Wheat head blight fungus)).